A 224-amino-acid chain; its full sequence is MDDIYGIIPVSKFKECKTRLSPFLSEEERENLLKVMLKDVTDTLRKYTDKIIIISADEDVLNYAKSLNLSVLKENDNSNLNKALKQAMEYCKGKTKKVIIMPSDIPLIGKTNLKMVIDSSKQLDFIIIPSKGGGTNTIIMKPLAIRTKFGDFSYKEHVNAADRKNLNPQVHDSLFMALDVNTTEDLGEIIVHGENTETRRYLKELKINVESVHGSERLKVTRGS.

It belongs to the CofC family. Homodimer.

The catalysed reaction is (2S)-2-phospholactate + GTP + H(+) = (2S)-lactyl-2-diphospho-5'-guanosine + diphosphate. Its pathway is cofactor biosynthesis; coenzyme F420 biosynthesis. Its function is as follows. Guanylyltransferase that catalyzes the activation of (2S)-2-phospholactate (2-PL) as (2S)-lactyl-2-diphospho-5'-guanosine, via the condensation of 2-PL with GTP. It is involved in the biosynthesis of coenzyme F420, a hydride carrier cofactor. The protein is 2-phospho-L-lactate guanylyltransferase of Methanobrevibacter smithii (strain ATCC 35061 / DSM 861 / OCM 144 / PS).